The primary structure comprises 150 residues: Globin-2 (150 aa).

A Globin domain is found at 11–150 (PLSDAEKNKI…MICILLSSAY (140 aa)). Positions 74 and 106 each coordinate heme b.

This sequence belongs to the globin family. In terms of assembly, monomer.

This is Globin-2 from Mordacia mordax (Southern hemisphere lamprey).